We begin with the raw amino-acid sequence, 359 residues long: N-acetylneuraminate-9-phosphate synthase (359 aa).

Residues Lys-61, Lys-74, and Lys-79 each carry the N6-acetyllysine modification. Ser-275 carries the phosphoserine modification. N6-acetyllysine is present on Lys-290. One can recognise an AFP-like domain in the interval Ser-294–His-353.

As to expression, ubiquitous.

The protein resides in the cytoplasm. It carries out the reaction aldehydo-N-acetyl-D-mannosamine 6-phosphate + phosphoenolpyruvate + H2O = N-acetylneuraminate 9-phosphate + phosphate. Its function is as follows. Catalyzes condensation of phosphoenolpyruvate (PEP) and N-acetylmannosamine 6-phosphate (ManNAc-6-P) to synthesize N-acetylneuraminate-9-phosphate (Neu5Ac-9-P). Neu5Ac-9-P is the phosphorylated forms of sialic acid N-acetylneuraminic acid (Neu5Ac). In contrast with human ortholog, has no detectable activity towards D-mannose 6-phosphate. This Mus musculus (Mouse) protein is N-acetylneuraminate-9-phosphate synthase.